Consider the following 364-residue polypeptide: Aminomethyltransferase (364 aa).

This sequence belongs to the GcvT family. As to quaternary structure, the glycine cleavage system is composed of four proteins: P, T, L and H.

It carries out the reaction N(6)-[(R)-S(8)-aminomethyldihydrolipoyl]-L-lysyl-[protein] + (6S)-5,6,7,8-tetrahydrofolate = N(6)-[(R)-dihydrolipoyl]-L-lysyl-[protein] + (6R)-5,10-methylene-5,6,7,8-tetrahydrofolate + NH4(+). The glycine cleavage system catalyzes the degradation of glycine. The polypeptide is Aminomethyltransferase (Geobacillus sp. (strain WCH70)).